The sequence spans 69 residues: Large ribosomal subunit protein bL28 (69 aa).

This sequence belongs to the bacterial ribosomal protein bL28 family.

This chain is Large ribosomal subunit protein bL28, found in Oleidesulfovibrio alaskensis (strain ATCC BAA-1058 / DSM 17464 / G20) (Desulfovibrio alaskensis).